The chain runs to 89 residues: Small ribosomal subunit protein uS15 (89 aa).

This sequence belongs to the universal ribosomal protein uS15 family. Part of the 30S ribosomal subunit. Forms a bridge to the 50S subunit in the 70S ribosome, contacting the 23S rRNA.

Functionally, one of the primary rRNA binding proteins, it binds directly to 16S rRNA where it helps nucleate assembly of the platform of the 30S subunit by binding and bridging several RNA helices of the 16S rRNA. Its function is as follows. Forms an intersubunit bridge (bridge B4) with the 23S rRNA of the 50S subunit in the ribosome. This is Small ribosomal subunit protein uS15 from Syntrophobacter fumaroxidans (strain DSM 10017 / MPOB).